The sequence spans 414 residues: MIOREX complex component 10 (414 aa).

A mitochondrion-targeting transit peptide spans 1-29 (MLSFRSLTSTFGFVSRFQIRRLGTSLSIQ). Over 30-373 (NLEVQDGRWK…ISLLNERNST (344 aa)) the chain is Mitochondrial matrix. The chain crosses the membrane as a helical span at residues 374-394 (FLEWIIIYLIAFELCFEIYHF). At 395–414 (YQKYSSYCSEPTNDDLDATK) the chain is on the mitochondrial intermembrane side.

It belongs to the RMD1/sif2 family. Associates with the mitochondrial ribosome.

The protein resides in the mitochondrion inner membrane. Its function is as follows. Component of MIOREX complexes, large expressome-like assemblies of ribosomes with factors involved in all the steps of post-transcriptional gene expression. In Saccharomyces cerevisiae (strain ATCC 204508 / S288c) (Baker's yeast), this protein is MIOREX complex component 10.